The sequence spans 204 residues: Holliday junction branch migration complex subunit RuvA (204 aa).

The interval 1-64 (MIARLRGTLL…EDGQTLFGFR (64 aa)) is domain I. The domain II stretch occupies residues 65–143 (TRAERDLFRR…GVGGGSTAAP (79 aa)). Residues 144–153 (AAGADHPTGE) form a flexible linker region. The domain III stretch occupies residues 153–204 (ENDPVSEAIEGLVALGYKPPEAARMARNAAEPELGCEAIIRRALQRAVPRGG).

This sequence belongs to the RuvA family. As to quaternary structure, homotetramer. Forms an RuvA(8)-RuvB(12)-Holliday junction (HJ) complex. HJ DNA is sandwiched between 2 RuvA tetramers; dsDNA enters through RuvA and exits via RuvB. An RuvB hexamer assembles on each DNA strand where it exits the tetramer. Each RuvB hexamer is contacted by two RuvA subunits (via domain III) on 2 adjacent RuvB subunits; this complex drives branch migration. In the full resolvosome a probable DNA-RuvA(4)-RuvB(12)-RuvC(2) complex forms which resolves the HJ.

Its subcellular location is the cytoplasm. In terms of biological role, the RuvA-RuvB-RuvC complex processes Holliday junction (HJ) DNA during genetic recombination and DNA repair, while the RuvA-RuvB complex plays an important role in the rescue of blocked DNA replication forks via replication fork reversal (RFR). RuvA specifically binds to HJ cruciform DNA, conferring on it an open structure. The RuvB hexamer acts as an ATP-dependent pump, pulling dsDNA into and through the RuvAB complex. HJ branch migration allows RuvC to scan DNA until it finds its consensus sequence, where it cleaves and resolves the cruciform DNA. In Halorhodospira halophila (strain DSM 244 / SL1) (Ectothiorhodospira halophila (strain DSM 244 / SL1)), this protein is Holliday junction branch migration complex subunit RuvA.